Reading from the N-terminus, the 951-residue chain is Valine--tRNA ligase (951 aa).

Positions 42 to 52 (PNVTGSLHMGH) match the 'HIGH' region motif. Residues 554–558 (KMSKS) carry the 'KMSKS' region motif. ATP is bound at residue Lys-557. The stretch at 880–944 (AGLINKEDEL…AEAKAKLIEQ (65 aa)) forms a coiled coil.

This sequence belongs to the class-I aminoacyl-tRNA synthetase family. ValS type 1 subfamily. Monomer.

Its subcellular location is the cytoplasm. It catalyses the reaction tRNA(Val) + L-valine + ATP = L-valyl-tRNA(Val) + AMP + diphosphate. Functionally, catalyzes the attachment of valine to tRNA(Val). As ValRS can inadvertently accommodate and process structurally similar amino acids such as threonine, to avoid such errors, it has a 'posttransfer' editing activity that hydrolyzes mischarged Thr-tRNA(Val) in a tRNA-dependent manner. The sequence is that of Valine--tRNA ligase from Shigella flexneri.